The primary structure comprises 601 residues: MEGADLLTAGVLFLFAAVAAVPLAARLGIGAVLGYLLAGIAIGPWGLGFISDVDEILHFSELGVVFLMFIIGLELNPSRLWQLRRSIFGVGAAQVLLSAAVLAGLLMLADFLWQAAVVGGIGLAMSSTAMALQLMREKGMNRSESGQLGFSVLLFQDLAVIPALALVPLLAGSADEHFDWFKVAMKVLAFAVMLIGGRYLLRPVFRFIAASGVREVFTAATLLLVLSAALFMDALGLSMALGTFIAGVLLAESEYRHELENAIDPFKGLLLGLFFISVGMSLNLGVLYTHLLWVAASVVILVVIKMLTLYLLARLYGIRSSERMQFASVLSQGGEFAFVLFSTASSQRLFQGDQMALLLVTVTLSMMTTPLLMKGIDKWLSRRLNGPEENDEKPWVEDDKPQVVVVGFGRFGQVIARLLMANKMRITVLERDIGAVNLMRKYGYKVYYGDATQVELLRSAGAEAAESIVITCNEPEDTMKLVALCQQHFPHLHILARARGRVEAHELLQAGVTQFSRETFSSALELGRKTLVSLGMHPHQAQRAQLHFRRLDMRMLRELIPEHSDMVQISRAREARRELEEIFQREMQQERRQLDGWDEFE.

Helical transmembrane passes span 4-24 (ADLLTAGVLFLFAAVAAVPLA), 29-49 (IGAVLGYLLAGIAIGPWGLGF), 55-75 (EILHFSELGVVFLMFIIGLEL), 87-107 (IFGVGAAQVLLSAAVLAGLLM), 111-131 (FLWQAAVVGGIGLAMSSTAMA), 152-172 (VLLFQDLAVIPALALVPLLAG), 177-197 (HFDWFKVAMKVLAFAVMLIGG), 207-227 (FIAASGVREVFTAATLLLVLS), 230-250 (LFMDALGLSMALGTFIAGVLL), 262-282 (AIDPFKGLLLGLFFISVGMSL), 284-304 (LGVLYTHLLWVAASVVILVVI), 324-344 (MQFASVLSQGGEFAFVLFSTA), and 356-376 (ALLLVTVTLSMMTTPLLMKGI). The 120-residue stretch at 400–519 (KPQVVVVGFG…AGVTQFSRET (120 aa)) folds into the RCK N-terminal domain.

The protein belongs to the monovalent cation:proton antiporter 2 (CPA2) transporter (TC 2.A.37) family. KefB subfamily. Interacts with the regulatory subunit KefG.

The protein localises to the cell inner membrane. Functionally, pore-forming subunit of a potassium efflux system that confers protection against electrophiles. Catalyzes K(+)/H(+) antiport. The protein is Glutathione-regulated potassium-efflux system protein KefB of Salmonella typhi.